Reading from the N-terminus, the 614-residue chain is RNA polymerase sigma factor RpoD (614 aa).

Residues 168-245 form a disordered region; sequence DPDDNIAAPT…PEEKRSYPQG (78 aa). Over residues 193 to 209 the composition is skewed to acidic residues; sequence EADDDEEESEGGDDEEE. The segment covering 215–232 has biased composition (polar residues); that stretch reads TRSSQPSVSVRYPSSFSD. The interval 380-450 is sigma-70 factor domain-2; it reads MVEANLRLVI…TRSIADQART (71 aa). The Interaction with polymerase core subunit RpoC motif lies at 404-407; sequence DLIQ. The tract at residues 459 to 535 is sigma-70 factor domain-3; the sequence is ETINKLNRIS…DSTMQSPIYV (77 aa). Residues 548–601 form a sigma-70 factor domain-4 region; sequence VLSGLTAREAKVLRMRFGIDMNTDHTLEEVGKQFDVTRERIRQIEAKAWRKLRH. A DNA-binding region (H-T-H motif) is located at residues 574–593; it reads LEEVGKQFDVTRERIRQIEA.

The protein belongs to the sigma-70 factor family. RpoD/SigA subfamily. As to quaternary structure, interacts transiently with the RNA polymerase catalytic core.

The protein resides in the cytoplasm. In terms of biological role, sigma factors are initiation factors that promote the attachment of RNA polymerase to specific initiation sites and are then released. This sigma factor is the primary sigma factor during exponential growth. This chain is RNA polymerase sigma factor RpoD, found in Pseudomonas putida (Arthrobacter siderocapsulatus).